The chain runs to 175 residues: Methylmalonyl-CoA epimerase, mitochondrial (175 aa).

The transit peptide at 1 to 35 (MARVLKVAAASAAGLFPRLRTPVSTVRTSASLSSH) directs the protein to the mitochondrion. The VOC domain occupies 46–175 (RLNHVAVAVP…GGVLVELEQA (130 aa)). Position 49 (histidine 49) interacts with Co(2+). Lysine 113 carries the post-translational modification N6-succinyllysine. Residue histidine 121 coordinates Co(2+). Residue lysine 149 is modified to N6-acetyllysine; alternate. Residue lysine 149 is modified to N6-succinyllysine; alternate. A Co(2+)-binding site is contributed by glutamate 171.

It belongs to the methylmalonyl-CoA epimerase family.

It is found in the mitochondrion. It catalyses the reaction (R)-methylmalonyl-CoA = (S)-methylmalonyl-CoA. Methylmalonyl-CoA epimerase involved in propionyl-CoA metabolism. The protein is Methylmalonyl-CoA epimerase, mitochondrial (MCEE) of Bos taurus (Bovine).